The chain runs to 125 residues: Bublin coiled-coil protein (125 aa).

Positions 46 to 95 (IRKLDTQLDHLNDYMSKMEERLKAHNDRMMETLKQQKEEREKRRRSFHER) form a coiled coil. The tract at residues 79 to 125 (KQQKEEREKRRRSFHERMSQNQSEDEEFKKQMSSILKRVQSVKRTEK) is disordered.

In terms of tissue distribution, expressed in many epithelial tissues, including the pharynx, intestine, excretory canal and hypodermis.

The protein resides in the cell junction. The protein localises to the cytoplasm. It is found in the cytoskeleton. Its function is as follows. Dynamic component of the endotube in intestinal cells, interacts with intermediate filament and regulates intestinal lumen morphology. This chain is Bublin coiled-coil protein, found in Caenorhabditis elegans.